Reading from the N-terminus, the 709-residue chain is Elongation factor G (709 aa).

Residues alanine 8–leucine 297 form the tr-type G domain. GTP-binding positions include alanine 17–threonine 24, aspartate 81–histidine 85, and asparagine 135–aspartate 138.

This sequence belongs to the TRAFAC class translation factor GTPase superfamily. Classic translation factor GTPase family. EF-G/EF-2 subfamily.

The protein resides in the cytoplasm. Functionally, catalyzes the GTP-dependent ribosomal translocation step during translation elongation. During this step, the ribosome changes from the pre-translocational (PRE) to the post-translocational (POST) state as the newly formed A-site-bound peptidyl-tRNA and P-site-bound deacylated tRNA move to the P and E sites, respectively. Catalyzes the coordinated movement of the two tRNA molecules, the mRNA and conformational changes in the ribosome. The chain is Elongation factor G from Lactococcus lactis subsp. cremoris (strain MG1363).